Here is a 135-residue protein sequence, read N- to C-terminus: Large ribosomal subunit protein bL21 (135 aa).

Positions 85 to 135 (YRVKRGHRQQYTQIEIESLNANGPASSDDEEAAETSDAEPDEDPEAEPAEA) are disordered. Positions 93–107 (QQYTQIEIESLNANG) are enriched in polar residues. Residues 111–135 (SDDEEAAETSDAEPDEDPEAEPAEA) are compositionally biased toward acidic residues.

This sequence belongs to the bacterial ribosomal protein bL21 family. In terms of assembly, part of the 50S ribosomal subunit. Contacts protein L20.

Its function is as follows. This protein binds to 23S rRNA in the presence of protein L20. This Salinibacter ruber (strain DSM 13855 / M31) protein is Large ribosomal subunit protein bL21.